Reading from the N-terminus, the 529-residue chain is Basal body-orientation factor 1 (529 aa).

Residues 1–13 are compositionally biased toward basic residues; the sequence is MPSKGKDKKKGKS. A disordered region spans residues 1 to 22; that stretch reads MPSKGKDKKKGKSRGKDTKKLI. Coiled coils occupy residues 55 to 198 and 271 to 361; these read DTSR…LKQE and IKEK…EVER. Positions 510-529 are disordered; the sequence is GKVVLPTIPKGPQESDTGTF.

This sequence belongs to the BBOF1 family. In terms of assembly, interacts with MNS1 and ODF2.

It is found in the cytoplasm. The protein localises to the cytoskeleton. It localises to the cilium basal body. Its subcellular location is the flagellum axoneme. Functionally, plays an essential role in sperm motility and male fertility by stabilizing the sperm flagellar axonemal structure. May be required for the stability of ODF2 and MANS1 proteins. Dispensable for the assembly and function of motile cilia. The polypeptide is Basal body-orientation factor 1 (Macaca fascicularis (Crab-eating macaque)).